Reading from the N-terminus, the 107-residue chain is Integration host factor subunit alpha (107 aa).

The protein belongs to the bacterial histone-like protein family. In terms of assembly, heterodimer of an alpha and a beta chain.

In terms of biological role, this protein is one of the two subunits of integration host factor, a specific DNA-binding protein that functions in genetic recombination as well as in transcriptional and translational control. In Bartonella tribocorum (strain CIP 105476 / IBS 506), this protein is Integration host factor subunit alpha.